We begin with the raw amino-acid sequence, 346 residues long: Enkurin domain-containing protein 1 (346 aa).

Positions 1-35 (MCEGPSRISGPIPPDPTLCPDNYRRPTSAQGRLEG) are disordered. Ser91 is modified (phosphoserine). The segment at 91–171 (SLKRKDPKDH…AHFLRAHSRC (81 aa)) is required for binding to microtubules. A compositionally biased stretch (basic and acidic residues) spans 114–125 (RFREQERSREQG). Disordered regions lie at residues 114 to 137 (RFRE…WRSP), 167 to 197 (AHSR…EPGL), and 260 to 280 (AEAR…TRMP). Ser136 bears the Phosphoserine mark. Residues 174 to 190 (GLPPPHVSSPQPTPPGP) are compositionally biased toward pro residues. Positions 251–343 (ERRDLWRREA…IFSRPKVFVK (93 aa)) constitute an Enkurin domain.

In terms of assembly, interacts with alpha-tubulin. Interacts (via central region) with CCP110 (via N-terminal region); competes with CEP97 for binding to CCP110.

Its subcellular location is the cytoplasm. It localises to the cytoskeleton. It is found in the microtubule organizing center. The protein resides in the centrosome. The protein localises to the centriole. Its subcellular location is the cilium basal body. It localises to the cell projection. It is found in the cilium. The protein resides in the spindle. The protein localises to the spindle pole. Its subcellular location is the cilium axoneme. Microtubule-binding protein which regulates microtubule organization and stability. Promotes the stability of astral microtubules and facilitates the proper orientation of the mitotic spindle. This allows the oriented division of basal keratinocytes and contributes to epidermal stratification. Required for the assembly of both primary and motile cilia. Destabilizes the interaction between CCP110 and CEP97 by competing with CEP97 for binding to CCP110 which promotes the removal of CCP110 and CEP97 from the mother centriole and allows the initiation of ciliogenesis. The polypeptide is Enkurin domain-containing protein 1 (ENKD1) (Homo sapiens (Human)).